The primary structure comprises 1470 residues: Isonitrile lipopeptide synthase (1470 aa).

The disordered stretch occupies residues 584-603 (PEPESQEAARPTAPAPTAPA). The Carrier domain occupies 974-1049 (AHDSTLERTI…ELARFLKQQE (76 aa)). O-(pantetheine 4'-phosphoryl)serine is present on Ser-1009. Over residues 1049-1059 (EQQAHAQVQPR) the composition is skewed to low complexity. Positions 1049-1070 (EQQAHAQVQPRPAGPGLPPTLL) are disordered.

This sequence belongs to the ATP-dependent AMP-binding enzyme family. Pantetheine 4'-phosphate serves as cofactor.

It catalyses the reaction 2 a (3R)-3-isocyanyl-fatty acyl-[ACP] + L-lysine + ATP + 2 NADPH = an isonitrile lipopeptide + 2 holo-[ACP] + AMP + diphosphate + 2 NADP(+). The catalysed reaction is 2 (3R)-3-isocyanylbutanoyl-[ACP] + L-lysine + ATP + 2 NADPH = (2S)-2,6-bis[(3R)-3-isocyanobutanamido]hexan-1-ol + 2 holo-[ACP] + AMP + diphosphate + 2 NADP(+). In terms of biological role, nonribosomal peptide synthetase (NRPS) involved in the biosynthesis of a unique class of isonitrile lipopeptides (INLPs). Catalyzes the final step in the pathway, i.e. the condensation of a (3R)-3-isocyanyl-fatty acyl-[ACP] to both amino groups of a lysine, producing isonitrile lipopeptides. Can use (3R)-3-isocyanylbutanoyl-[ACP] as substrate, leading to (2S)-2,6-bis[(3R)-3-isocyanobutanamido]hexan-1-ol. The sequence is that of Isonitrile lipopeptide synthase from Streptomyces coeruleorubidus.